We begin with the raw amino-acid sequence, 333 residues long: tRNA N6-adenosine threonylcarbamoyltransferase (333 aa).

His-108 and His-112 together coordinate Fe cation. Residues 129-133, Asp-161, Glu-178, and Ser-258 contribute to the substrate site; that span reads LVSGG. Asp-286 lines the Fe cation pocket.

It belongs to the KAE1 / TsaD family. Fe(2+) is required as a cofactor.

The protein resides in the cytoplasm. The catalysed reaction is L-threonylcarbamoyladenylate + adenosine(37) in tRNA = N(6)-L-threonylcarbamoyladenosine(37) in tRNA + AMP + H(+). Functionally, required for the formation of a threonylcarbamoyl group on adenosine at position 37 (t(6)A37) in tRNAs that read codons beginning with adenine. Is probably involved in the transfer of the threonylcarbamoyl moiety of threonylcarbamoyl-AMP (TC-AMP) to the N6 group of A37. The polypeptide is tRNA N6-adenosine threonylcarbamoyltransferase (Pyrobaculum islandicum (strain DSM 4184 / JCM 9189 / GEO3)).